The following is a 510-amino-acid chain: Maturase K (510 aa).

This sequence belongs to the intron maturase 2 family. MatK subfamily.

Its subcellular location is the plastid. The protein resides in the chloroplast. Usually encoded in the trnK tRNA gene intron. Probably assists in splicing its own and other chloroplast group II introns. This chain is Maturase K, found in Thuja plicata (Western red-cedar).